The chain runs to 88 residues: Large ribosomal subunit protein eL20 (88 aa).

It belongs to the eukaryotic ribosomal protein eL20 family. In terms of assembly, part of the 50S ribosomal subunit. Binds 23S rRNA.

The polypeptide is Large ribosomal subunit protein eL20 (Aeropyrum pernix (strain ATCC 700893 / DSM 11879 / JCM 9820 / NBRC 100138 / K1)).